The chain runs to 784 residues: MLRALWLFWILVAITVLFSKRCSAQESLSCDASGVCDGRSRSFTSIPSGLTAAMKSLDLSFNKITYIGHGDLRACANLQVLILKSSRINTIEGDAFYSLGSLEHLDLSDNHLSSLSSSWFGPLSSLKYLNLMGNPYQTLGVTSLFPNLTNLQTLRIGNVETFSEIRRIDFAGLTSLNELEIKALSLRNYQSQSLKSIRDIHHLTLHLSESAFLLEIFADILSSVRYLELRDTNLARFQFSPLPVDEVSSPMKKLAFRGSVLTDESFNELLKLLRYILELSEVEFDDCTLNGLGDFNPSESDVVSELGKVETVTIRRLHIPQFYLFYDLSTVYSLLEKVKRITVENSKVFLVPCSFSQHLKSLEFLDLSENLMVEEYLKNSACKGAWPSLQTLVLSQNHLRSMQKTGEILLTLKNLTSLDISRNTFHPMPDSCQWPEKMRFLNLSSTGIRVVKTCIPQTLEVLDVSNNNLDSFSLFLPRLQELYISRNKLKTLPDASLFPVLLVMKIRENAVSTFSKDQLGSFPKLETLEAGDNHFVCSCELLSFTMETPALAQILVDWPDSYLCDSPPRLHGHRLQDARPSVLECHQAALVSGVCCALLLLILLVGALCHHFHGLWYLRMMWAWLQAKRKPKKAPCRDVCYDAFVSYSEQDSHWVENLMVQQLENSDPPFKLCLHKRDFVPGKWIIDNIIDSIEKSHKTVFVLSENFVRSEWCKYELDFSHFRLFDENNDAAILVLLEPIERKAIPQRFCKLRKIMNTKTYLEWPLDEGQQEVFWVNLRTAIKS.

An N-terminal signal peptide occupies residues 1–24 (MLRALWLFWILVAITVLFSKRCSA). At 25 to 587 (QESLSCDASG…ARPSVLECHQ (563 aa)) the chain is on the extracellular side. An intrachain disulfide couples Cys-30 to Cys-36. LRR repeat units lie at residues 54–77 (MKSLDLSFNKITYIGHGDLRACAN), 78–101 (LQVLILKSSRINTIEGDAFYSLGS), 102–125 (LEHLDLSDNHLSSLSSSWFGPLSS), 126–150 (LKYLNLMGNPYQTLGVTSLFPNLTN), 151–175 (LQTLRIGNVETFSEIRRIDFAGLTS), 176–199 (LNELEIKALSLRNYQSQSLKSIRD), 200–223 (IHHLTLHLSESAFLLEIFADILSS), 224–250 (VRYLELRDTNLARFQFSPLPVDEVSSP), 251–278 (MKKLAFRGSVLTDESFNELLKLLRYILE), 279–308 (LSEVEFDDCTLNGLGDFNPSESDVVSELGK), 309–337 (VETVTIRRLHIPQFYLFYDLSTVYSLLEK), 338–361 (VKRITVENSKVFLVPCSFSQHLKS), 362–388 (LEFLDLSENLMVEEYLKNSACKGAWPS), 389–414 (LQTLVLSQNHLRSMQKTGEILLTLKN), 415–437 (LTSLDISRNTFHPMPDSCQWPEK), 438–457 (MRFLNLSSTGIRVVKTCIPQ), 458–478 (TLEVLDVSNNNLDSFSLFLPR), 479–500 (LQELYISRNKLKTLPDASLFPV), and 501–524 (LLVMKIRENAVSTFSKDQLGSFPK). Residue Asn-147 is glycosylated (N-linked (GlcNAc...) asparagine). Cysteines 353 and 382 form a disulfide. The N-linked (GlcNAc...) asparagine glycan is linked to Asn-414. The cysteines at positions 432 and 454 are disulfide-linked. The N-linked (GlcNAc...) asparagine glycan is linked to Asn-442. The region spanning 525–576 (LETLEAGDNHFVCSCELLSFTMETPALAQILVDWPDSYLCDSPPRLHGHRLQ) is the LRRCT domain. Residues 588–608 (AALVSGVCCALLLLILLVGAL) form a helical membrane-spanning segment. Topologically, residues 609-784 (CHHFHGLWYL…WVNLRTAIKS (176 aa)) are cytoplasmic. The 144-residue stretch at 639–782 (VCYDAFVSYS…VFWVNLRTAI (144 aa)) folds into the TIR domain. A Glycyl lysine isopeptide (Lys-Gly) (interchain with G-Cter in ubiquitin) cross-link involves residue Lys-754. The ATG16L1-binding motif motif lies at 761 to 778 (YLEWPLDEGQQEVFWVNL).

This sequence belongs to the Toll-like receptor family. In terms of assembly, interacts with LY96, TLR1 and TLR6 (via extracellular domain). TLR2 seems to exist in heterodimers with either TLR1 or TLR6 before stimulation by the ligand. The heterodimers form bigger oligomers in response to their corresponding ligands as well as further heterotypic associations with other receptors such as CD14 and/or CD36. Binds MYD88 (via TIR domain). Interacts with TICAM1. Interacts with CNPY3. Interacts with ATG16L1. Interacts with non-modified M.tuberculosis protein MPT83. Interacts with PPP1R11. Interacts with TIRAP. As to quaternary structure, (Microbial infection) Interacts with Staphylococcus aureus protein SSL3; this interaction inhibits TLR2-mediated cytokine production. (Microbial infection) Interacts with Toxoplasma gondii micronemal protein 1 (MIC1); the interaction promotes activation of bone marrow-derived dendritic cells and macrophages. Interacts with Toxoplasma gondii micronemal protein 4 (MIC4); the interaction promotes activation of bone marrow-derived dendritic cells and macrophages. In terms of processing, ubiquitinated at Lys-754 by PPP1R11, leading to its degradation. Deubiquitinated by USP2. Glycosylation of Asn-442 is critical for secretion of the N-terminal ectodomain of TLR2. Detected in a macrophage cell line, smooth muscle, lung, spleen, thymus, brain and adipose tissue. Cell surface expression detected in lung alveolar macrophages, dendritic macrophages and at lower levels in lung macrophages (at protein level).

Its subcellular location is the cell membrane. It is found in the cytoplasmic vesicle. It localises to the phagosome membrane. The protein localises to the membrane raft. Functionally, cooperates with LY96 to mediate the innate immune response to bacterial lipoproteins and other microbial cell wall components. Cooperates with TLR1 or TLR6 to mediate the innate immune response to bacterial lipoproteins or lipopeptides. Acts via MYD88 and TRAF6, leading to NF-kappa-B activation, cytokine secretion and the inflammatory response. May also promote apoptosis in response to lipoproteins. Forms activation clusters composed of several receptors depending on the ligand, these clusters trigger signaling from the cell surface and subsequently are targeted to the Golgi in a lipid-raft dependent pathway. Forms the cluster TLR2:TLR6:CD14:CD36 in response to diacylated lipopeptides and TLR2:TLR1:CD14 in response to triacylated lipopeptides. Recognizes M.tuberculosis major T-antigen EsxA (ESAT-6) which inhibits downstream MYD88-dependent signaling. Acts as the major receptor for M.tuberculosis lipoproteins LprA, LprG, LpqH and PhoS1 (pstS1), in conjunction with TLR1 and for some but not all lipoproteins CD14 and/or CD36. The lipoproteins act as agonists to modulate antigen presenting cell functions in response to the pathogen. Recombinant MPT83 from M.tuberculosis stimulates secretion of cytokines (TNF-alpha, IL-6 and IL-12p40) by mouse macrophage cell lines in a TLR2-dependent fashion, which leads to increased host innate immunity responses against the bacterium. Lung macrophages which express low levels of TLR2 respond poorly to stimulation by M.tuberculosis LpqH. Required for normal uptake of M.tuberculosis, a process that is inhibited by M.tuberculosis LppM. Interacts with TICAM2. In terms of biological role, (Microbial infection) Mediates activation of bone marrow-derived dendritic cells and macrophages, and production of pro-inflammatory cytokines, such as IL12 (IL12B/IL12A), triggered by Toxoplasma gondii micronemal protein 4 (MIC4) and micronemal protein 1 (MIC1). In Mus musculus (Mouse), this protein is Toll-like receptor 2 (Tlr2).